We begin with the raw amino-acid sequence, 591 residues long: Zinc finger protein 48 (591 aa).

The residue at position 1 (Met-1) is an N-acetylmethionine. Disordered stretches follow at residues 1–24 (MEASPGDEFEHSPQERDGPEIKEE) and 55–80 (GLGKRQPRDPVPRILGEPRWGQGSND). Basic and acidic residues-rich tracts occupy residues 8 to 24 (EFEHSPQERDGPEIKEE) and 55 to 65 (GLGKRQPRDPV). Position 12 is a phosphoserine (Ser-12). Lys-58 participates in a covalent cross-link: Glycyl lysine isopeptide (Lys-Gly) (interchain with G-Cter in SUMO2). 2 consecutive C2H2-type zinc fingers follow at residues 83-105 (AVCGECGKSFRQMSDLVKHQRTH) and 111-133 (YKCGVCGKGFGDSSARIKHQRTH). The tract at residues 131 to 160 (RTHTGEKAYRVRPPAPGPPKMPRSRIPAGE) is disordered. Lys-150 is covalently cross-linked (Glycyl lysine isopeptide (Lys-Gly) (interchain with G-Cter in SUMO2)). 2 C2H2-type zinc fingers span residues 163 to 185 (TICGECGKSFRQSSDLVKHQRTH) and 191 to 213 (YKCGICGKGFGDSSARIKHQRTH). Residues 206–241 (RIKHQRTHRGDQLPRPVVPRRQPSPAAPAAPHRPKA) form a disordered region. Residues 224–235 (PRRQPSPAAPAA) are compositionally biased toward low complexity. Residue Lys-240 forms a Glycyl lysine isopeptide (Lys-Gly) (interchain with G-Cter in SUMO2) linkage. C2H2-type zinc fingers lie at residues 246–268 (YICTDCGKRFVLSCSLLSHQRSH) and 274–296 (FGCDVCGKEFARGSDLVKHLRVH). Lys-300 participates in a covalent cross-link: Glycyl lysine isopeptide (Lys-Gly) (interchain with G-Cter in SUMO2). C2H2-type zinc fingers lie at residues 302–324 (YLCPECGKGFADSSARVKHLRTH) and 330–352 (HACPECNRSFSLSSTLLRHRLTH). A disordered region spans residues 372–429 (PPPPPLGTSPSLTPRSPSHSSDGPFGLPGLEPEPGGPQAGEPPPPLAGDKPHKCPECG). Low complexity predominate over residues 379–404 (TSPSLTPRSPSHSSDGPFGLPGLEPE). The C2H2-type 9 zinc finger occupies 423–445 (HKCPECGKGFRRSSDLVKHHRVH). Residue Lys-449 forms a Glycyl lysine isopeptide (Lys-Gly) (interchain with G-Cter in SUMO2) linkage. The C2H2-type 10 zinc-finger motif lies at 451-473 (YLCPECGKGFADSSARVKHLRTH). The tract at residues 464 to 512 (SARVKHLRTHQGERTRPPPPPSTLLRPHNPPGSVPIVPQSRVQGRPSGP) is disordered. Pro residues predominate over residues 480 to 496 (PPPPPSTLLRPHNPPGS). C2H2-type zinc fingers lie at residues 516-538 (HVCGFCGKEFPRSSDLVKHRRTH) and 544-566 (YKCAECGKGFGDSSARIKHQRGH). Positions 564–591 (RGHLALKPFGVGDGPPRPLKEESPAGLE) are disordered. The segment covering 581–591 (PLKEESPAGLE) has biased composition (basic and acidic residues). A Glycyl lysine isopeptide (Lys-Gly) (interchain with G-Cter in SUMO2) cross-link involves residue Lys-583.

This sequence belongs to the krueppel C2H2-type zinc-finger protein family.

Its subcellular location is the nucleus. Its function is as follows. May be involved in transcriptional regulation. In Mus musculus (Mouse), this protein is Zinc finger protein 48 (Znf48).